The following is a 513-amino-acid chain: Bifunctional pantoate ligase/cytidylate kinase (513 aa).

The pantoate--beta-alanine ligase stretch occupies residues 1-282 (MGTFHRLTTT…VGQTRLIDNC (282 aa)). Residue 32-39 (MGALHGGH) coordinates ATP. Histidine 39 serves as the catalytic Proton donor. Residue glutamine 63 participates in (R)-pantoate binding. Glutamine 63 lines the beta-alanine pocket. Position 152–155 (152–155 (GQKD)) interacts with ATP. Glutamine 158 serves as a coordination point for (R)-pantoate. ATP contacts are provided by residues valine 181 and 189 to 192 (LSSR). Residues 283–513 (LLDRRRPILA…HLYRSRFPQP (231 aa)) are cytidylate kinase.

This sequence in the N-terminal section; belongs to the pantothenate synthetase family. In the C-terminal section; belongs to the cytidylate kinase family. Type 1 subfamily.

It is found in the cytoplasm. It catalyses the reaction (R)-pantoate + beta-alanine + ATP = (R)-pantothenate + AMP + diphosphate + H(+). The catalysed reaction is CMP + ATP = CDP + ADP. The enzyme catalyses dCMP + ATP = dCDP + ADP. The protein operates within cofactor biosynthesis; (R)-pantothenate biosynthesis; (R)-pantothenate from (R)-pantoate and beta-alanine: step 1/1. Its function is as follows. Catalyzes the condensation of pantoate with beta-alanine in an ATP-dependent reaction via a pantoyl-adenylate intermediate. Catalyzes the transfer of a phosphate group from ATP to either CMP or dCMP to form CDP or dCDP and ADP, respectively. This chain is Bifunctional pantoate ligase/cytidylate kinase, found in Thermosynechococcus vestitus (strain NIES-2133 / IAM M-273 / BP-1).